We begin with the raw amino-acid sequence, 272 residues long: Prohibitin 1 (272 aa).

N-acetylalanine is present on A2. T91 is modified (phosphothreonine). 2 positions are modified to N6-acetyllysine: K128 and K186. Positions K177 to I211 form a coiled coil. N6-acetyllysine; alternate is present on K202. An N6-succinyllysine; alternate modification is found at K202. Residue Y249 is modified to Phosphotyrosine.

Belongs to the prohibitin family. Interacts with PHB2. Interacts with STOML2. Interacts with CD86 (via cytoplasmic domain); the interactions increases after priming with CD40. In terms of assembly, (Microbial infection) Interacts with human enterovirus 71/EV-71 capsid protein VP0, protein 3CD and protease 3C. Widely expressed in different tissues.

It is found in the mitochondrion inner membrane. The protein localises to the nucleus. It localises to the cell membrane. Its subcellular location is the cytoplasm. With respect to regulation, target of the anti-cancer drug Rocaglamide (Roc-A). Functionally, protein with pleiotropic attributes mediated in a cell-compartment- and tissue-specific manner, which include the plasma membrane-associated cell signaling functions, mitochondrial chaperone, and transcriptional co-regulator of transcription factors in the nucleus. Plays a role in adipose tissue and glucose homeostasis in a sex-specific manner. Contributes to pulmonary vascular remodeling by accelerating proliferation of pulmonary arterial smooth muscle cells. In terms of biological role, in the mitochondria, together with PHB2, forms large ring complexes (prohibitin complexes) in the inner mitochondrial membrane (IMM) and functions as a chaperone protein that stabilizes mitochondrial respiratory enzymes and maintains mitochondrial integrity in the IMM, which is required for mitochondrial morphogenesis, neuronal survival, and normal lifespan. The prohibitin complex, with DNAJC19, regulates cardiolipin remodeling and the protein turnover of OMA1 in a cardiolipin-binding manner. Regulates mitochondrial respiration activity playing a role in cellular aging. The prohibitin complex plays a role of mitophagy receptor involved in targeting mitochondria for autophagic degradation. Involved in mitochondrial-mediated antiviral innate immunity, activates RIG-I-mediated signal transduction and production of IFNB1 and pro-inflammatory cytokine IL6. Its function is as follows. In the nucleus, acts as a transcription coregulator, enhances promoter binding by TP53, a transcription factor it activates, but reduces the promoter binding by E2F1, a transcription factor it represses. Interacts with STAT3 to affect IL17 secretion in T-helper Th17 cells. In the plasma membrane, cooperates with CD86 to mediate CD86-signaling in B lymphocytes that regulates the level of IgG1 produced through the activation of distal signaling intermediates. Upon CD40 engagement, required to activate NF-kappa-B signaling pathway via phospholipase C and protein kinase C activation. Functionally, (Microbial infection) In neuronal cells, cell surface-expressed PHB1 is involved in human enterovirus 71/EV-71 entry into neuronal cells specifically, while membrane-bound mitochondrial PHB1 associates with the virus replication complex and facilitates viral replication. May serve as a receptor for EV71. This chain is Prohibitin 1 (Phb1), found in Mus musculus (Mouse).